The sequence spans 571 residues: Proline--tRNA ligase (571 aa).

It belongs to the class-II aminoacyl-tRNA synthetase family. ProS type 1 subfamily. As to quaternary structure, homodimer.

It localises to the cytoplasm. It catalyses the reaction tRNA(Pro) + L-proline + ATP = L-prolyl-tRNA(Pro) + AMP + diphosphate. In terms of biological role, catalyzes the attachment of proline to tRNA(Pro) in a two-step reaction: proline is first activated by ATP to form Pro-AMP and then transferred to the acceptor end of tRNA(Pro). As ProRS can inadvertently accommodate and process non-cognate amino acids such as alanine and cysteine, to avoid such errors it has two additional distinct editing activities against alanine. One activity is designated as 'pretransfer' editing and involves the tRNA(Pro)-independent hydrolysis of activated Ala-AMP. The other activity is designated 'posttransfer' editing and involves deacylation of mischarged Ala-tRNA(Pro). The misacylated Cys-tRNA(Pro) is not edited by ProRS. This chain is Proline--tRNA ligase, found in Pseudomonas entomophila (strain L48).